Consider the following 889-residue polypeptide: Alanine--tRNA ligase (889 aa).

4 residues coordinate Zn(2+): H569, H573, C671, and H675.

Belongs to the class-II aminoacyl-tRNA synthetase family. Requires Zn(2+) as cofactor.

It is found in the cytoplasm. The catalysed reaction is tRNA(Ala) + L-alanine + ATP = L-alanyl-tRNA(Ala) + AMP + diphosphate. Functionally, catalyzes the attachment of alanine to tRNA(Ala) in a two-step reaction: alanine is first activated by ATP to form Ala-AMP and then transferred to the acceptor end of tRNA(Ala). Also edits incorrectly charged Ser-tRNA(Ala) and Gly-tRNA(Ala) via its editing domain. The protein is Alanine--tRNA ligase of Synechococcus sp. (strain CC9605).